The following is a 319-amino-acid chain: Acetyl-coenzyme A carboxylase carboxyl transferase subunit alpha (319 aa).

Residues 31 to 292 form the CoA carboxyltransferase C-terminal domain; sequence EIDSAIRSLR…KTYLSRQLSE (262 aa).

It belongs to the AccA family. In terms of assembly, acetyl-CoA carboxylase is a heterohexamer composed of biotin carboxyl carrier protein (AccB), biotin carboxylase (AccC) and two subunits each of ACCase subunit alpha (AccA) and ACCase subunit beta (AccD).

The protein localises to the cytoplasm. It catalyses the reaction N(6)-carboxybiotinyl-L-lysyl-[protein] + acetyl-CoA = N(6)-biotinyl-L-lysyl-[protein] + malonyl-CoA. Its pathway is lipid metabolism; malonyl-CoA biosynthesis; malonyl-CoA from acetyl-CoA: step 1/1. Its function is as follows. Component of the acetyl coenzyme A carboxylase (ACC) complex. First, biotin carboxylase catalyzes the carboxylation of biotin on its carrier protein (BCCP) and then the CO(2) group is transferred by the carboxyltransferase to acetyl-CoA to form malonyl-CoA. The chain is Acetyl-coenzyme A carboxylase carboxyl transferase subunit alpha from Rhodopirellula baltica (strain DSM 10527 / NCIMB 13988 / SH1).